The chain runs to 388 residues: Trichodiene synthase (388 aa).

Positions 109, 173, 234, 238, 242, and 248 each coordinate Mg(2+). Positions 109–113 are aspartate-rich domain; sequence DDSRE.

The protein belongs to the trichodiene synthase family. The cofactor is Mg(2+). Mn(2+) serves as cofactor.

It catalyses the reaction (2E,6E)-farnesyl diphosphate = trichodiene + diphosphate. It participates in sesquiterpene biosynthesis; trichothecene biosynthesis. Its function is as follows. Trichodiene synthase; part of the gene cluster that mediates the production of the antimicrobial trichothecene harzianum A (HA) that plays a role in Botrytis cinerea antagonistic activity and plant defense priming. The biosynthesis of harzianum A begins with the cyclization of farnesyl diphosphate to trichodiene and is catalyzed by the trichodiene synthase TRI5. Trichodiene undergoes a series of oxygenations catalyzed by the cytochrome P450 monooxygenase TRI4. TRI4 controls the addition of 3 oxygens at C-2, C-11, and the C-12, C-13-epoxide to form the intermediate isotrichodiol. Isotrichodiol then undergoes a non-enzymatic isomerization and cyclization to form 12,13-epoxytrichothec-9-ene (EPT) which is further converted to trichodermol by the cytochrome P450 monooxygenase TRI11 via C-4 hydroxylation. The last step of HA synthesis is esterification of an octatriendioyl moiety to the C-4 oxygen of trichodermol. The octatriendioyl moiety is probably produced by the polyketide synthase TRI17 and the esterification performed by the trichothecene O-acetyltransferase TRI3. In Trichoderma arundinaceum, this protein is Trichodiene synthase.